The following is a 521-amino-acid chain: Apolipoprotein N-acyltransferase (521 aa).

6 helical membrane passes run 27-47 (VLLA…IAFA), 64-84 (LGFV…TIVV), 93-113 (IVSV…PAVV), 125-145 (ISLL…RAFL), 167-187 (IADI…NVVL), and 202-222 (YPVK…AYGF). The 245-residue stretch at 239–483 (IQGNIDQNIK…EAVLNGEVRL (245 aa)) folds into the CN hydrolase domain. Residue glutamate 281 is the Proton acceptor of the active site. Lysine 344 is an active-site residue. Cysteine 394 functions as the Nucleophile in the catalytic mechanism. A helical transmembrane segment spans residues 493-513 (YGDVFAWACVAGAAVVAALAF).

It belongs to the CN hydrolase family. Apolipoprotein N-acyltransferase subfamily.

The protein localises to the cell inner membrane. The enzyme catalyses N-terminal S-1,2-diacyl-sn-glyceryl-L-cysteinyl-[lipoprotein] + a glycerophospholipid = N-acyl-S-1,2-diacyl-sn-glyceryl-L-cysteinyl-[lipoprotein] + a 2-acyl-sn-glycero-3-phospholipid + H(+). It participates in protein modification; lipoprotein biosynthesis (N-acyl transfer). Its function is as follows. Catalyzes the phospholipid dependent N-acylation of the N-terminal cysteine of apolipoprotein, the last step in lipoprotein maturation. In Geobacter metallireducens (strain ATCC 53774 / DSM 7210 / GS-15), this protein is Apolipoprotein N-acyltransferase.